The chain runs to 537 residues: ATP synthase subunit beta 1 (537 aa).

164 to 171 is an ATP binding site; the sequence is GGAGVGKT. Residues 471–537 are disordered; that stretch reads PKQSATEKNS…ESLEEPQNGR (67 aa). Polar residues-rich tracts occupy residues 473 to 498 and 507 to 528; these read QSAT…SPGP and IPSS…AQNE.

Belongs to the ATPase alpha/beta chains family. In terms of assembly, F-type ATPases have 2 components, CF(1) - the catalytic core - and CF(0) - the membrane proton channel. CF(1) has five subunits: alpha(3), beta(3), gamma(1), delta(1), epsilon(1). CF(0) has three main subunits: a(1), b(2) and c(9-12). The alpha and beta chains form an alternating ring which encloses part of the gamma chain. CF(1) is attached to CF(0) by a central stalk formed by the gamma and epsilon chains, while a peripheral stalk is formed by the delta and b chains.

Its subcellular location is the cell inner membrane. It catalyses the reaction ATP + H2O + 4 H(+)(in) = ADP + phosphate + 5 H(+)(out). Its function is as follows. Produces ATP from ADP in the presence of a proton gradient across the membrane. The catalytic sites are hosted primarily by the beta subunits. This chain is ATP synthase subunit beta 1, found in Pseudoalteromonas atlantica (strain T6c / ATCC BAA-1087).